Here is a 388-residue protein sequence, read N- to C-terminus: F-box protein At3g49510 (388 aa).

In terms of domain architecture, F-box spans 1 to 47 (MTTISDLSDDLVGDILSRVPFTSLISVRSTCKKWNALSKNQIFGRKT).

In Arabidopsis thaliana (Mouse-ear cress), this protein is F-box protein At3g49510.